Reading from the N-terminus, the 643-residue chain is Spore coat assembly protein ExsA (643 aa).

The LysM domain maps to 2 to 47 (KIHIVQKGDTLWKIAKKYGVDFDTLKKTNTQLSNPDLIMPGMKIKV). Repeat copies occupy residues 113–120 (QIKPQKEM), 121–128 (QVKPQKEV), 129–136 (QVKPQKEM), 137–144 (QVKPQKEV), 238–250 (PQVK…NIVS), 251–263 (PQVK…NIVS), 264–276 (PQVK…NIVS), 277–289 (PQVK…NIVS), 290–302 (PQVK…NIVS), 303–315 (PQVK…NIVS), 316–328 (PQVK…NIVS), 354–365 (IMDNNQPPNIMP), 366–377 (IMDNNQPPNIMP), 378–389 (IMDNNQMPNMMP), 390–401 (IMDNNQMPNMMP), 402–413 (IMDNNQMPNMMP), 414–425 (IMDNNQMPNMMP), 426–437 (IMDNNQMPNMMP), 438–449 (IMDNNQMPNMMP), 450–461 (IMDNNQMPNMMP), 462–473 (IMDNNQMPNIMP), 474–485 (IMDNNQMPNMMP), 486–497 (IMDNNQMPNIMP), 498–509 (IMDNNQMPNMMP), and 510–521 (IMDNNQPPNMMP). The tract at residues 113–144 (QIKPQKEMQVKPQKEVQVKPQKEMQVKPQKEV) is 4 X 8 AA tandem repeats of Q-[IV]-K-P-Q-K-E-[MV]. Residues 115-157 (KPQKEMQVKPQKEVQVKPQKEMQVKPQKEVQKEQPIQKEKPVE) are compositionally biased toward basic and acidic residues. The segment at 115–160 (KPQKEMQVKPQKEVQVKPQKEMQVKPQKEVQKEQPIQKEKPVEKPS) is disordered. The interval 238–328 (PQVKKENVGN…KKENVGNIVS (91 aa)) is 7 X 13 AA tandem repeats of P-Q-V-K-K-E-N-V-G-N-I-V-S. A 14 X 12 AA tandem repeats of I-M-D-N-N-Q-[MP]-P-N-[IM]-M-P region spans residues 354–521 (IMDNNQPPNI…DNNQPPNMMP (168 aa)). The disordered stretch occupies residues 585-643 (GGESRLYSPQPGGPQYANPLYYQPTQSAYAPQPGTMYYQPDPPNVFGEPVSEEEDEEEV). Over residues 634–643 (VSEEEDEEEV) the composition is skewed to acidic residues.

This sequence to B.subtilis SafA.

Functionally, required for the normal assembly and anchoring of both the spore coat and the exosporium layers. The sequence is that of Spore coat assembly protein ExsA (exsA) from Bacillus cereus.